Reading from the N-terminus, the 397-residue chain is Major outer membrane porin, serovar L3 (397 aa).

The first 22 residues, 1-22, serve as a signal peptide directing secretion; the sequence is MKKLLKSVLVFAALSSASSLQA.

Belongs to the chlamydial porin (CP) (TC 1.B.2) family. Part of a disulfide cross-linked outer membrane complex (COMC) composed of the major outer membrane porin (MOMP), the small cysteine-rich protein (OmcA) and the large cysteine-rich periplasmic protein (OmcB).

Its subcellular location is the cell outer membrane. Functionally, in elementary bodies (EBs, the infectious stage, which is able to survive outside the host cell) provides the structural integrity of the outer envelope through disulfide cross-links with the small cysteine-rich protein and the large cysteine-rich periplasmic protein. It has been described in publications as the Sarkosyl-insoluble COMC (Chlamydia outer membrane complex), and serves as the functional equivalent of peptidoglycan. In terms of biological role, permits diffusion of specific solutes through the outer membrane. The chain is Major outer membrane porin, serovar L3 (ompA) from Chlamydia trachomatis.